Reading from the N-terminus, the 226-residue chain is Cytidylate kinase (226 aa).

ATP is bound at residue 10 to 18; it reads GPASSGKST.

The protein belongs to the cytidylate kinase family. Type 1 subfamily.

It localises to the cytoplasm. It catalyses the reaction CMP + ATP = CDP + ADP. It carries out the reaction dCMP + ATP = dCDP + ADP. This is Cytidylate kinase from Streptococcus pyogenes serotype M1.